Here is a 329-residue protein sequence, read N- to C-terminus: 4-hydroxythreonine-4-phosphate dehydrogenase (329 aa).

Residues His136 and Thr137 each coordinate substrate. His166, His211, and His266 together coordinate a divalent metal cation. 3 residues coordinate substrate: Lys274, Asn283, and Arg292.

It belongs to the PdxA family. As to quaternary structure, homodimer. It depends on Zn(2+) as a cofactor. The cofactor is Mg(2+). Requires Co(2+) as cofactor.

It is found in the cytoplasm. It carries out the reaction 4-(phosphooxy)-L-threonine + NAD(+) = 3-amino-2-oxopropyl phosphate + CO2 + NADH. It functions in the pathway cofactor biosynthesis; pyridoxine 5'-phosphate biosynthesis; pyridoxine 5'-phosphate from D-erythrose 4-phosphate: step 4/5. Functionally, catalyzes the NAD(P)-dependent oxidation of 4-(phosphooxy)-L-threonine (HTP) into 2-amino-3-oxo-4-(phosphooxy)butyric acid which spontaneously decarboxylates to form 3-amino-2-oxopropyl phosphate (AHAP). The polypeptide is 4-hydroxythreonine-4-phosphate dehydrogenase (Shigella boydii serotype 18 (strain CDC 3083-94 / BS512)).